We begin with the raw amino-acid sequence, 587 residues long: MSSDRTREVTKRILMVLFGLWLLQFFFLPPLTTRPTELSYSAFLDALEDRRVQEAVVRDRVLQGKMVGGESFTVTLPPDAAGLAERLEEAGVEQRYEVTRTPWWVTLLPTVLWLAVMVGLFAWAQKRQAGAFGLARSTVKPLAPGESPVTFADVAGMDEVKGELEEIVDYLKNPDKYRAIGARIPKGVLLYGPPGTGKTLLARAVAGEAGVPFFALSGSSFVELFVGMGASRVRELFAQARKNAPCIVFIDEIDAVGRQRGSAAVVGGHDEREQTLNQLLTEMDGFGAYEGVIVMAATNRPDVLDKALLRPGRFDRQIPVGPPDAAGREEILRVHAKGKQLDPSLDLAAVARRTPGFTGADLANLLNEAAILAVRRGRSHITMSEIDEAIDRVVAGGPARKGRMIRPEEKRRVAVHEAGHALVATLTPGADPVQKVTIIPRGRAGGFTLTTPEEDQMLYTRSELEARLKMLLGGLAAEEVLLGERSTGAQDDLRRATQVAREMISRYGMGQSVGLMAVPDTDWPGVQNLSQESAAAIEREVQALLDRLYREVRSLIETNRDRLVALVVELSDRETLDGDDVRRILSA.

The Cytoplasmic segment spans residues 1–12 (MSSDRTREVTKR). Residues 13–33 (ILMVLFGLWLLQFFFLPPLTT) form a helical membrane-spanning segment. The Extracellular portion of the chain corresponds to 34 to 102 (RPTELSYSAF…EQRYEVTRTP (69 aa)). The chain crosses the membrane as a helical span at residues 103-123 (WWVTLLPTVLWLAVMVGLFAW). Over 124 to 587 (AQKRQAGAFG…GDDVRRILSA (464 aa)) the chain is Cytoplasmic. Residue 192–199 (GPPGTGKT) participates in ATP binding. His-416 lines the Zn(2+) pocket. Residue Glu-417 is part of the active site. 2 residues coordinate Zn(2+): His-420 and Asp-492.

This sequence in the central section; belongs to the AAA ATPase family. It in the C-terminal section; belongs to the peptidase M41 family. Homohexamer. Zn(2+) is required as a cofactor.

Its subcellular location is the cell membrane. Its function is as follows. Acts as a processive, ATP-dependent zinc metallopeptidase for both cytoplasmic and membrane proteins. Plays a role in the quality control of integral membrane proteins. This is ATP-dependent zinc metalloprotease FtsH 2 from Symbiobacterium thermophilum (strain DSM 24528 / JCM 14929 / IAM 14863 / T).